Consider the following 38-residue polypeptide: MKVRSSVKKRCEHCQVIKRHGRVLIICKANPKHNQKQG.

The protein belongs to the bacterial ribosomal protein bL36 family.

The protein is Large ribosomal subunit protein bL36 of Pseudothermotoga lettingae (strain ATCC BAA-301 / DSM 14385 / NBRC 107922 / TMO) (Thermotoga lettingae).